We begin with the raw amino-acid sequence, 152 residues long: Large ribosomal subunit protein bL9 (152 aa).

The protein belongs to the bacterial ribosomal protein bL9 family.

Functionally, binds to the 23S rRNA. This Synechocystis sp. (strain ATCC 27184 / PCC 6803 / Kazusa) protein is Large ribosomal subunit protein bL9.